The primary structure comprises 477 residues: MSFSQFGYPYNATSQFFVSATPSTTCCDSISRSVTEGSSASQTAASFCCPSYENRLLASTRTELNAALGMYGSPYAAAAAAAGQNYANYFPYSADPSAIYSSLNPQYEIKEGSGSLHSTITQPATYYPYDHSLGQYQYDRYGTVDFNGSTRRKNATRETTSTLKTWLYEHRKNPYPTKGEKIMLAIITKMTLTQVSTWFANARRRLKKENKMTWSPKNKAGDDRKEDLDSKDSKDEQDLQFSDLDDMEDEDCDKLDSDCEKSGQDDLPTSSPPKRDCNPDIPLHSNFPSFPCGLKSLGPLNPDYLDHLGSKPQQQQPSPQSTSINTVALSHFESSEKPRIWSLARTAAAGVVLGTQHVGDVRTGPVDCQMQGVRLPTVGAVQCGELKGLQDPTNLSNTESLFQEGLQGIHKAYSSGSFKTLQLHSSSYPGLTESCQYSSMEGFPSAGKTETESSELSDTCPTIQEAKTTAFRPVMKR.

Residues glycine 148–asparagine 210 constitute a DNA-binding region (homeobox). Disordered regions lie at residues glutamate 209–proline 282 and aspartate 303–serine 323. The span at lysine 219 to glutamine 237 shows a compositional bias: basic and acidic residues. A compositionally biased stretch (acidic residues) spans aspartate 243 to aspartate 253. Residues lysine 254–glutamine 264 are compositionally biased toward basic and acidic residues. Low complexity predominate over residues serine 310–serine 321.

It belongs to the TALE/IRO homeobox family.

It is found in the nucleus. Its function is as follows. Transcription factor. Binds to the iroquois binding site (IBS) motif of target genes to regulate gene expression; functions as a transcriptional activator or repressor. In concert with irx5a, plays a role in visual performance. The protein is Iroquois homeobox protein 6a of Danio rerio (Zebrafish).